The primary structure comprises 515 residues: Maturase K (515 aa).

Belongs to the intron maturase 2 family. MatK subfamily.

It localises to the plastid. The protein resides in the chloroplast. In terms of biological role, usually encoded in the trnK tRNA gene intron. Probably assists in splicing its own and other chloroplast group II introns. In Pinus attenuata (Knobcone pine), this protein is Maturase K.